The sequence spans 104 residues: Glutaredoxin-C15 (104 aa).

Residues 1-103 (MERVAKLSTE…PMLKAAGAIW (103 aa)) enclose the Glutaredoxin domain. A disulfide bond links Cys21 and Cys24.

The protein belongs to the glutaredoxin family. CC-type subfamily.

The protein resides in the cytoplasm. Functionally, has a glutathione-disulfide oxidoreductase activity in the presence of NADPH and glutathione reductase. Reduces low molecular weight disulfides and proteins. This is Glutaredoxin-C15 (GRXC15) from Oryza sativa subsp. japonica (Rice).